Reading from the N-terminus, the 400-residue chain is Elongation factor Tu (400 aa).

The tr-type G domain occupies 10–210 (KPHCNVGTIG…VDTYIPIPPR (201 aa)). Positions 19–26 (GHVDHGKT) are G1. Position 19 to 26 (19 to 26 (GHVDHGKT)) interacts with GTP. Thr-26 contacts Mg(2+). The G2 stretch occupies residues 60 to 64 (GLTIA). Positions 81 to 84 (DCPG) are G3. Residues 81–85 (DCPGH) and 136–139 (NKCD) each bind GTP. Residues 136 to 139 (NKCD) form a G4 region. The interval 174–176 (SAI) is G5.

The protein belongs to the TRAFAC class translation factor GTPase superfamily. Classic translation factor GTPase family. EF-Tu/EF-1A subfamily. As to quaternary structure, monomer.

The protein localises to the cytoplasm. It carries out the reaction GTP + H2O = GDP + phosphate + H(+). Its function is as follows. GTP hydrolase that promotes the GTP-dependent binding of aminoacyl-tRNA to the A-site of ribosomes during protein biosynthesis. In Dehalococcoides mccartyi (strain CBDB1), this protein is Elongation factor Tu.